The following is a 245-amino-acid chain: 1-(5-phosphoribosyl)-5-[(5-phosphoribosylamino)methylideneamino] imidazole-4-carboxamide isomerase (245 aa).

Asp-8 acts as the Proton acceptor in catalysis. Catalysis depends on Asp-131, which acts as the Proton donor.

The protein belongs to the HisA/HisF family.

It is found in the cytoplasm. The catalysed reaction is 1-(5-phospho-beta-D-ribosyl)-5-[(5-phospho-beta-D-ribosylamino)methylideneamino]imidazole-4-carboxamide = 5-[(5-phospho-1-deoxy-D-ribulos-1-ylimino)methylamino]-1-(5-phospho-beta-D-ribosyl)imidazole-4-carboxamide. It participates in amino-acid biosynthesis; L-histidine biosynthesis; L-histidine from 5-phospho-alpha-D-ribose 1-diphosphate: step 4/9. The chain is 1-(5-phosphoribosyl)-5-[(5-phosphoribosylamino)methylideneamino] imidazole-4-carboxamide isomerase from Verminephrobacter eiseniae (strain EF01-2).